The primary structure comprises 932 residues: MAQLTPMMQQYVETKEQYKDCILFYRLGDFYEMFFEDALVASKELEITLTGKNCGQEERAPMCGIPYHAAEGYISKLIGKGYKVAICEQVEDPKLAKGIVKREVIRIVTPGTNLNTQTLDETRNNYLMGIIFTDEHCGISTVDITTGDYYVTEVENNRKILDEIYKYTPSEIVCNPEFFHCGLDVEDLKNRYQIAVSTFEDWYYDSEQSVKTLKEHFKVGSLDGLGLKDYSVGVNAAGAILKYLYNTQKNSLSHLTHITPYVTSRYMVIDSSSRRNLELTETLREKQKRGSLLWVLDKTKTAMGARMLRSFVEQPLITMDEISARYDAISELNDNVITREEIREYLNYIYDLERLMGKISYKSANPRDLIAFASSLSMLPHIKYLLSTCESALLKQIHEEMDALDDLQNLIDRSIAEEPPIGIKEGGIIKEGFHTEVDTLRKAKTEGKVWLAELEAKEKEQTGIKNLKVKYNRVFGYYLEVTNSYANLVPENWIRKQTLSNAERYTTPELKELEDKILNAEDRLFSLEYDLFAEIRDQIAEEVKRIQKTAKAVANIDAFASLAYVAERNQFIRPELNTNGTIDIKEGRHPVVEQMIPNDMFVSNDTYLDNAEKRISIITGPNMAGKSTYMRQTALIVLMAQVGSFVPASYANIGIVDRIFTRVGASDDLASGQSTFMVEMTEVANILRNATKNSLLILDEIGRGTSTFDGLSIAWAVIEHISNTSMLGAKTLFATHYHELTELEGKISGVNNYCIAVKEQGEDIVFLRKIIGGGADKSYGIQVAKLAGVPNSVLVRAREIVDQLSENDIAEKARHIVSAAEISNLTPETEGEVNTNKMYTTKVNATEVITTEVNTAKMNTTEMVSNQESVEQPRNFGQMSFFITEDTKQKKASSEFSEKLVQEINQFDLANMTPVEALLKLDKLQKKIRSHT.

Residue 620–627 coordinates ATP; that stretch reads GPNMAGKS.

Belongs to the DNA mismatch repair MutS family.

This protein is involved in the repair of mismatches in DNA. It is possible that it carries out the mismatch recognition step. This protein has a weak ATPase activity. The polypeptide is DNA mismatch repair protein MutS (Lachnoclostridium phytofermentans (strain ATCC 700394 / DSM 18823 / ISDg) (Clostridium phytofermentans)).